Here is a 126-residue protein sequence, read N- to C-terminus: Adenosine 5'-monophosphoramidase HINT1 (126 aa).

Position 2 is an N-acetylalanine (Ala2). Residues 18–126 form the HIT domain; the sequence is IFGKIIRKEI…GGRQMHWPPG (109 aa). 2 positions are modified to N6-acetyllysine: Lys21 and Lys30. 43 to 44 provides a ligand contact to AMP; sequence DI. Residues Ser45 and Ser72 each carry the phosphoserine modification. Residues Asn99, 105–107, and 112–114 each bind AMP; these read GQS and HLH. The Histidine triad motif signature appears at 110 to 114; it reads HVHLH. His112 (tele-AMP-histidine intermediate) is an active-site residue.

The protein belongs to the HINT family. Homodimer. Interacts with CDK7. Interacts with RUVBL1 and RUVBL2 and is associated with the LEF1/TCF1-CTNNB1 complex and with a KAT5 histone acetyltransferase complex. Identified in a complex with MITF and CTNNB1. Interacts with CDC34 and RBX1, and is part of a SCF (SKP2-CUL1-F-box protein) E3 ubiquitin-protein ligase complex. Interacts with SUMO1, SUMO2 and RGS17. Interacts with the Ten-1 ICD form of TENM1. Interacts with CALM1; interaction increases in the presence of calcium ions. In terms of tissue distribution, widely expressed.

It localises to the cytoplasm. The protein resides in the nucleus. The catalysed reaction is adenosine 5'-phosphoramidate + H2O = AMP + NH4(+). Exhibits adenosine 5'-monophosphoramidase activity, hydrolyzing purine nucleotide phosphoramidates with a single phosphate group such as adenosine 5'monophosphoramidate (AMP-NH2) to yield AMP and NH2. Hydrolyzes adenosine 5'monophosphomorpholidate (AMP-morpholidate) and guanosine 5'monophosphomorpholidate (GMP-morpholidate). Hydrolyzes lysyl-AMP (AMP-N-epsilon-(N-alpha-acetyl lysine methyl ester)) generated by lysine tRNA ligase, as well as Met-AMP, His-AMP and Asp-AMP, lysyl-GMP (GMP-N-epsilon-(N-alpha-acetyl lysine methyl ester)) and AMP-N-alanine methyl ester. Hydrolyzes 3-indolepropionic acyl-adenylate, tryptamine adenosine phosphoramidate monoester and other fluorogenic purine nucleoside tryptamine phosphoramidates in vitro. Can also convert adenosine 5'-O-phosphorothioate and guanosine 5'-O-phosphorothioate to the corresponding nucleoside 5'-O-phosphates with concomitant release of hydrogen sulfide. In addition, functions as scaffolding protein that modulates transcriptional activation by the LEF1/TCF1-CTNNB1 complex and by the complex formed with MITF and CTNNB1. Modulates p53/TP53 levels and p53/TP53-mediated apoptosis. Modulates proteasomal degradation of target proteins by the SCF (SKP2-CUL1-F-box protein) E3 ubiquitin-protein ligase complex. Also exhibits SUMO-specific isopeptidase activity, deconjugating SUMO1 from RGS17. Deconjugates SUMO1 from RANGAP1. The sequence is that of Adenosine 5'-monophosphoramidase HINT1 (HINT1) from Homo sapiens (Human).